A 65-amino-acid polypeptide reads, in one-letter code: Large ribosomal subunit protein bL35 (65 aa).

Basic residues predominate over residues Met-1–Ala-11. Residues Met-1–Arg-25 are disordered.

It belongs to the bacterial ribosomal protein bL35 family.

This is Large ribosomal subunit protein bL35 from Nitratidesulfovibrio vulgaris (strain ATCC 29579 / DSM 644 / CCUG 34227 / NCIMB 8303 / VKM B-1760 / Hildenborough) (Desulfovibrio vulgaris).